Consider the following 807-residue polypeptide: uncharacterized protein (807 aa).

The first 18 residues, 1-18 (MNTVLFVILLAAIGSNHG), serve as a signal peptide directing secretion. The Extracellular portion of the chain corresponds to 19–704 (LIDERLTVNR…GLFTDIFGGE (686 aa)). Positions 133-142 (TTTTAAPQTG) are enriched in polar residues. Positions 133–171 (TTTTAAPQTGNRRRRRAAGDEPNTDDNTPPNLEIPDWLD) are disordered. Residues asparagine 277 and asparagine 660 are each glycosylated (N-linked (GlcNAc...) asparagine; by host). A helical transmembrane segment spans residues 705-725 (VWAVIAAIFSPVFLTAFALII). The Cytoplasmic portion of the chain corresponds to 726–807 (SLINFIPAVR…GERQVISRTN (82 aa)).

The protein resides in the host membrane. This is an uncharacterized protein from Magallana gigas (Pacific oyster).